Here is a 399-residue protein sequence, read N- to C-terminus: Protein TWIN LOV 1 (399 aa).

Positions 26–97 constitute a PAS 1 domain; it reads LWIKEALEEL…MEIREAIREE (72 aa). The region spanning 98–153 is the PAC 1 domain; sequence RSVQVSLLNYRKSGSPFWMLFHMCPVFGKDDGKVTNFVAVQVPISGREHHRKKLRN. The region spanning 249–320 is the PAS 2 domain; sequence SLVISLGRIK…EMKECILKGQ (72 aa). At C296 the chain carries S-4a-FMN cysteine. Residues 320 to 376 form the PAC 2 domain; it reads QSCTVQILNYSNRKDKSSFWNLLHISPVRNASGKTAYFVGVQVEASCRNTEIKELRP.

Interacts with VTC2, VTC5 and BLH10. In terms of processing, FMN binds covalently to cysteine after exposure to blue light and is reversed in the dark.

This chain is Protein TWIN LOV 1 (TLP1), found in Arabidopsis thaliana (Mouse-ear cress).